Here is a 574-residue protein sequence, read N- to C-terminus: Proline--tRNA ligase (574 aa).

It belongs to the class-II aminoacyl-tRNA synthetase family. ProS type 1 subfamily. In terms of assembly, homodimer.

It localises to the cytoplasm. The enzyme catalyses tRNA(Pro) + L-proline + ATP = L-prolyl-tRNA(Pro) + AMP + diphosphate. Catalyzes the attachment of proline to tRNA(Pro) in a two-step reaction: proline is first activated by ATP to form Pro-AMP and then transferred to the acceptor end of tRNA(Pro). As ProRS can inadvertently accommodate and process non-cognate amino acids such as alanine and cysteine, to avoid such errors it has two additional distinct editing activities against alanine. One activity is designated as 'pretransfer' editing and involves the tRNA(Pro)-independent hydrolysis of activated Ala-AMP. The other activity is designated 'posttransfer' editing and involves deacylation of mischarged Ala-tRNA(Pro). The misacylated Cys-tRNA(Pro) is not edited by ProRS. The chain is Proline--tRNA ligase from Pseudoalteromonas translucida (strain TAC 125).